We begin with the raw amino-acid sequence, 33 residues long: Cytochrome b6-f complex subunit 6 (33 aa).

The chain crosses the membrane as a helical span at residues 4–24 (ITIISYFGLLLASIIFTLVLF).

Belongs to the PetL family. In terms of assembly, the 4 large subunits of the cytochrome b6-f complex are cytochrome b6, subunit IV (17 kDa polypeptide, PetD), cytochrome f and the Rieske protein, while the 4 small subunits are PetG, PetL, PetM and PetN. The complex functions as a dimer.

The protein localises to the plastid. It is found in the chloroplast thylakoid membrane. Its function is as follows. Component of the cytochrome b6-f complex, which mediates electron transfer between photosystem II (PSII) and photosystem I (PSI), cyclic electron flow around PSI, and state transitions. PetL is important for photoautotrophic growth as well as for electron transfer efficiency and stability of the cytochrome b6-f complex. The protein is Cytochrome b6-f complex subunit 6 of Pinus mugo (Dwarf mountain pine).